Reading from the N-terminus, the 886-residue chain is Translation initiation factor IF-2 (886 aa).

3 disordered regions span residues 1 to 25 (MSET…LKRP), 50 to 229 (RRAL…PAEE), and 253 to 272 (KGAE…TGDE). The span at 50 to 60 (RRALGEPHVLR) shows a compositional bias: basic and acidic residues. Low complexity predominate over residues 63–73 (APALDVVAPAP). The span at 74–83 (QAAPPAPTQQ) shows a compositional bias: pro residues. Low complexity predominate over residues 84-106 (PQPRVASRPQPQQRSSSGVILRS). The span at 107–181 (LTEEEREARS…KRRSESEAKR (75 aa)) shows a compositional bias: basic and acidic residues. The segment covering 185-225 (GGEPAPAGANAAPRKAPALSAAPGSAAPSGQPGPAGAVGAR) has biased composition (low complexity). The tr-type G domain occupies 383-553 (SRPPVVTIMG…ALQAELLDLK (171 aa)). Residues 392-399 (GHVDHGKT) are G1. 392 to 399 (GHVDHGKT) lines the GTP pocket. Positions 417–421 (GITQH) are G2. Residues 439-442 (DTPG) are G3. GTP-binding positions include 439–443 (DTPGH) and 493–496 (NKID). Positions 493 to 496 (NKID) are G4. The segment at 529–531 (SAT) is G5.

Belongs to the TRAFAC class translation factor GTPase superfamily. Classic translation factor GTPase family. IF-2 subfamily.

The protein resides in the cytoplasm. Its function is as follows. One of the essential components for the initiation of protein synthesis. Protects formylmethionyl-tRNA from spontaneous hydrolysis and promotes its binding to the 30S ribosomal subunits. Also involved in the hydrolysis of GTP during the formation of the 70S ribosomal complex. This is Translation initiation factor IF-2 from Methylocella silvestris (strain DSM 15510 / CIP 108128 / LMG 27833 / NCIMB 13906 / BL2).